A 276-amino-acid chain; its full sequence is E3 ubiquitin-protein ligase CCNB1IP1 (276 aa).

The RING-type; atypical zinc finger occupies 10 to 52; it reads CNYRKCRIKLSGYAWVTACSHIFCDQHGSGEFSRSPAICPACN. The stretch at 146 to 182 forms a coiled coil; the sequence is MKKVLEEYKKKFSDISEKLMERNRQYQKLQGLYDSLR.

As to quaternary structure, interacts with CCNB1, UBE2L3 and NF2. In terms of processing, ubiquitinated; autoubiquitinated. Post-translationally, phosphorylated by CDK1 on serine or threonine residues (in vitro). As to expression, expressed predominantly in the testes and 17 day embryos (corresponding to prophase I in females). Weakly or not expressed in other tissues.

The protein resides in the nucleus. The protein localises to the chromosome. It catalyses the reaction S-ubiquitinyl-[E2 ubiquitin-conjugating enzyme]-L-cysteine + [acceptor protein]-L-lysine = [E2 ubiquitin-conjugating enzyme]-L-cysteine + N(6)-ubiquitinyl-[acceptor protein]-L-lysine.. The protein operates within protein modification; protein ubiquitination. Functionally, ubiquitin E3 ligase that acts as a limiting factor for crossing-over during meiosis: required during zygonema to limit the colocalization of RNF212 with MutS-gamma-associated recombination sites and thereby establish early differentiation of crossover and non-crossover sites. Later, it is directed by MutL-gamma to stably accumulate at designated crossover sites. Probably promotes the dissociation of RNF212 and MutS-gamma to allow the progression of recombination and the implementation of the final steps of crossing over. Modulates cyclin-B levels and participates in the regulation of cell cycle progression through the G2 phase. Overexpression causes delayed entry into mitosis. This is E3 ubiquitin-protein ligase CCNB1IP1 (Ccnb1ip1) from Mus musculus (Mouse).